Reading from the N-terminus, the 323-residue chain is Methionyl-tRNA formyltransferase (323 aa).

A (6S)-5,6,7,8-tetrahydrofolate-binding site is contributed by 113 to 116 (SLLP).

It belongs to the Fmt family.

The enzyme catalyses L-methionyl-tRNA(fMet) + (6R)-10-formyltetrahydrofolate = N-formyl-L-methionyl-tRNA(fMet) + (6S)-5,6,7,8-tetrahydrofolate + H(+). In terms of biological role, attaches a formyl group to the free amino group of methionyl-tRNA(fMet). The formyl group appears to play a dual role in the initiator identity of N-formylmethionyl-tRNA by promoting its recognition by IF2 and preventing the misappropriation of this tRNA by the elongation apparatus. This chain is Methionyl-tRNA formyltransferase, found in Nitrosococcus oceani (strain ATCC 19707 / BCRC 17464 / JCM 30415 / NCIMB 11848 / C-107).